A 332-amino-acid chain; its full sequence is Transaldolase (332 aa).

Lys-136 serves as the catalytic Schiff-base intermediate with substrate.

The protein belongs to the transaldolase family. Type 1 subfamily.

Its subcellular location is the cytoplasm. It carries out the reaction D-sedoheptulose 7-phosphate + D-glyceraldehyde 3-phosphate = D-erythrose 4-phosphate + beta-D-fructose 6-phosphate. It functions in the pathway carbohydrate degradation; pentose phosphate pathway; D-glyceraldehyde 3-phosphate and beta-D-fructose 6-phosphate from D-ribose 5-phosphate and D-xylulose 5-phosphate (non-oxidative stage): step 2/3. Its function is as follows. Transaldolase is important for the balance of metabolites in the pentose-phosphate pathway. This Trichormus variabilis (strain ATCC 29413 / PCC 7937) (Anabaena variabilis) protein is Transaldolase.